Reading from the N-terminus, the 463-residue chain is MTKPFSVVLASLLAITSTVSPLASAQQSQPLDRIAAIVDEDVVLQSELDRAVRNVKSQYAGRENQLPPDDVLQRQVLERLVLVKLQVSRADGNGIRVSDEELNRAIASIAQQNGTTVDGLRQKLAADGMGYADFRASVRDEIIVQRLRQSFAQSRISVSEGEVDTALAQQAATGSQYHLAHILIGLPEGANAEQIATGQKKVDGVKALIDKGELDFSAAAVRYSDSPNALEGGDLGWRSLDEIPNAFAQLIRDMQPGQVAGPLRGPSGFQLLKLVEMRDANAGGEKKMVTEYHARHILVRIGDNQTEAQAKAKIDTIRARIVGGADFQATAKESSEDTNSRGQGGDLGWFPADAFGPDFGKQVESLTDGAVSEPFRTQAGWHIVQRVGSRQTDVSAENQRAQVRETIGRRKLEEEYNRYLQELRGEAYVSYRTGDRADDNATAAPAKSPDPAAPSPPPAKPTR.

Positions 1–25 are cleaved as a signal peptide; it reads MTKPFSVVLASLLAITSTVSPLASA. 2 consecutive PpiC domains span residues 174 to 276 and 289 to 388; these read GSQY…KLVE and VTEY…QRVG. 2 disordered regions span residues 329-348 and 431-463; these read ATAKESSEDTNSRGQGGDLG and YRTGDRADDNATAAPAKSPDPAAPSPPPAKPTR. Positions 441–450 are enriched in low complexity; that stretch reads ATAAPAKSPD. A compositionally biased stretch (pro residues) spans 451–463; that stretch reads PAAPSPPPAKPTR.

Its subcellular location is the periplasm. It carries out the reaction [protein]-peptidylproline (omega=180) = [protein]-peptidylproline (omega=0). Its function is as follows. Chaperone involved in the correct folding and assembly of outer membrane proteins. Recognizes specific patterns of aromatic residues and the orientation of their side chains, which are found more frequently in integral outer membrane proteins. May act in both early periplasmic and late outer membrane-associated steps of protein maturation. The sequence is that of Chaperone SurA from Xanthomonas axonopodis pv. citri (strain 306).